The following is a 179-amino-acid chain: Large ribosomal subunit protein uL15 (179 aa).

It belongs to the universal ribosomal protein uL15 family. In terms of assembly, part of the 50S ribosomal subunit.

Binds to the 23S rRNA. The chain is Large ribosomal subunit protein uL15 from Archaeoglobus fulgidus (strain ATCC 49558 / DSM 4304 / JCM 9628 / NBRC 100126 / VC-16).